The chain runs to 212 residues: Placenta-specific protein 1 (212 aa).

Residues Met-1–Gly-22 form the signal peptide.

The protein belongs to the PLAC1 family. Expressed in placenta. Localizes primarily to differentiated syncytiotrophoblast throughout gestation as well as to a small population of villous cytotrophoblasts. Also detected in maternal blood and rapidly disappears following delivery, but is not detected in other adult or fetal tissues examined.

It localises to the secreted. May play a role in placental development. The sequence is that of Placenta-specific protein 1 from Homo sapiens (Human).